The chain runs to 31 residues: MSVFLGYIIFLAAFFGLATGLFLGLKAIKLI.

The helical transmembrane segment at 3–23 (VFLGYIIFLAAFFGLATGLFL) threads the bilayer.

Belongs to the PetL family. As to quaternary structure, the 4 large subunits of the cytochrome b6-f complex are cytochrome b6, subunit IV (17 kDa polypeptide, PetD), cytochrome f and the Rieske protein, while the 4 small subunits are PetG, PetL, PetM and PetN. The complex functions as a dimer.

It is found in the plastid. The protein localises to the chloroplast thylakoid membrane. Functionally, component of the cytochrome b6-f complex, which mediates electron transfer between photosystem II (PSII) and photosystem I (PSI), cyclic electron flow around PSI, and state transitions. PetL is important for photoautotrophic growth as well as for electron transfer efficiency and stability of the cytochrome b6-f complex. This Pyropia yezoensis (Susabi-nori) protein is Cytochrome b6-f complex subunit 6.